A 452-amino-acid chain; its full sequence is Isocitrate dehydrogenase [NADP], mitochondrial (452 aa).

Residues 1–39 constitute a mitochondrion transit peptide; sequence MAGYLRAVSSLCRASGSARTWAPAALTVPSWPEQPRRHY. An N6-acetyllysine mark is found at Lys-45, Lys-48, Lys-67, and Lys-69. Residues Lys-80 and Lys-106 each carry the N6-acetyllysine; alternate modification. N6-succinyllysine; alternate is present on residues Lys-80 and Lys-106. NADP(+) is bound by residues 115-117 and Arg-122; that span reads TIT. Thr-117 lines the D-threo-isocitrate pocket. D-threo-isocitrate-binding positions include 134-140 and Arg-149; that span reads SPNGTIR. Lys-155 is subject to N6-acetyllysine. N6-acetyllysine; alternate is present on Lys-166. At Lys-166 the chain carries N6-succinyllysine; alternate. Arg-172 provides a ligand contact to D-threo-isocitrate. An N6-acetyllysine; alternate mark is found at Lys-180 and Lys-193. An N6-succinyllysine; alternate mark is found at Lys-180 and Lys-193. Lys-199 is subject to N6-acetyllysine. An N6-acetyllysine; alternate modification is found at Lys-256. At Lys-256 the chain carries N6-succinyllysine; alternate. N6-acetyllysine occurs at positions 263, 272, 275, and 280. Lys-282 is subject to N6-acetyllysine; alternate. Lys-282 carries the N6-succinyllysine; alternate modification. Position 291 (Asp-291) interacts with Mn(2+). Lys-299 provides a ligand contact to NADP(+). Asp-314 contacts Mn(2+). Residues 349-354 and Asn-367 contribute to the NADP(+) site; that span reads GTVTRH. Position 384 is an N6-acetyllysine; alternate (Lys-384). Residue Lys-384 is modified to N6-succinyllysine; alternate. 3 positions are modified to N6-acetyllysine: Lys-400, Lys-413, and Lys-442.

This sequence belongs to the isocitrate and isopropylmalate dehydrogenases family. In terms of assembly, homodimer. Mg(2+) serves as cofactor. Requires Mn(2+) as cofactor. Post-translationally, acetylation at Lys-413 dramatically reduces catalytic activity. Deacetylated by SIRT3. In terms of tissue distribution, predominantly expressed in heart, liver and kidney. Expressed in activated B lymphocytes.

The protein resides in the mitochondrion. The enzyme catalyses D-threo-isocitrate + NADP(+) = 2-oxoglutarate + CO2 + NADPH. Its function is as follows. Plays a role in intermediary metabolism and energy production. It may tightly associate or interact with the pyruvate dehydrogenase complex. The chain is Isocitrate dehydrogenase [NADP], mitochondrial (Idh2) from Mus musculus (Mouse).